A 495-amino-acid polypeptide reads, in one-letter code: Surface E' protein (495 aa).

Residues 224–235 (GTLIGLVALIGV) form a helical membrane-spanning segment.

The protein localises to the cell membrane. This Coxiella burnetii protein is Surface E' protein (cbbE').